The chain runs to 192 residues: Ubiquitin-conjugating enzyme E2 27 (192 aa).

Residues 2–150 (IDFSRIQKEL…ARYWTETFAK (149 aa)) enclose the UBC core domain. C88 acts as the Glycyl thioester intermediate in catalysis. Residues 153-192 (SLEEKVKRLVEMGFGDAQVRSAIESSGGDENLALEKLCSA) form the UBA domain.

It belongs to the ubiquitin-conjugating enzyme family. Expressed in seeds, pistils, siliques, hypocotyls and leaves.

The enzyme catalyses S-ubiquitinyl-[E1 ubiquitin-activating enzyme]-L-cysteine + [E2 ubiquitin-conjugating enzyme]-L-cysteine = [E1 ubiquitin-activating enzyme]-L-cysteine + S-ubiquitinyl-[E2 ubiquitin-conjugating enzyme]-L-cysteine.. It functions in the pathway protein modification; protein ubiquitination. Functionally, accepts the ubiquitin from the E1 complex and catalyzes its covalent attachment to other proteins. In Arabidopsis thaliana (Mouse-ear cress), this protein is Ubiquitin-conjugating enzyme E2 27 (UBC27).